The chain runs to 562 residues: NAD-dependent malic enzyme (562 aa).

Tyr-101 serves as the catalytic Proton donor. Arg-154 contributes to the NAD(+) binding site. Lys-172 functions as the Proton acceptor in the catalytic mechanism. Positions 243, 244, and 267 each coordinate a divalent metal cation. NAD(+) contacts are provided by Asp-267 and Asn-415.

Belongs to the malic enzymes family. Homotetramer. The cofactor is Mg(2+). It depends on Mn(2+) as a cofactor.

The catalysed reaction is (S)-malate + NAD(+) = pyruvate + CO2 + NADH. It catalyses the reaction oxaloacetate + H(+) = pyruvate + CO2. In Vibrio campbellii (strain ATCC BAA-1116), this protein is NAD-dependent malic enzyme.